Here is a 70-residue protein sequence, read N- to C-terminus: Sec-independent protein translocase protein TatA (70 aa).

Residues 1–21 (MFGLGGQELILILLIILLLFG) traverse the membrane as a helical segment. Over residues 50-62 (FNKVVDEPPRKTP) the composition is skewed to basic and acidic residues. Residues 50–70 (FNKVVDEPPRKTPENSTGSKS) are disordered.

Belongs to the TatA/E family. As to quaternary structure, forms a complex with TatC.

Its subcellular location is the cell inner membrane. Part of the twin-arginine translocation (Tat) system that transports large folded proteins containing a characteristic twin-arginine motif in their signal peptide across membranes. TatA could form the protein-conducting channel of the Tat system. This Chlorobium limicola (strain DSM 245 / NBRC 103803 / 6330) protein is Sec-independent protein translocase protein TatA.